We begin with the raw amino-acid sequence, 362 residues long: 3-dehydroquinate synthase (362 aa).

NAD(+) contacts are provided by residues 70 to 75, 104 to 108, 128 to 129, Lys141, and Lys150; these read DGEQYK, GVIGD, and TT. 3 residues coordinate Zn(2+): Glu183, His246, and His263.

The protein belongs to the sugar phosphate cyclases superfamily. Dehydroquinate synthase family. The cofactor is NAD(+). It depends on Co(2+) as a cofactor. Requires Zn(2+) as cofactor.

It is found in the cytoplasm. It catalyses the reaction 7-phospho-2-dehydro-3-deoxy-D-arabino-heptonate = 3-dehydroquinate + phosphate. Its pathway is metabolic intermediate biosynthesis; chorismate biosynthesis; chorismate from D-erythrose 4-phosphate and phosphoenolpyruvate: step 2/7. In terms of biological role, catalyzes the conversion of 3-deoxy-D-arabino-heptulosonate 7-phosphate (DAHP) to dehydroquinate (DHQ). In Pasteurella multocida (strain Pm70), this protein is 3-dehydroquinate synthase.